A 139-amino-acid polypeptide reads, in one-letter code: Acyl carrier protein 4, chloroplastic (139 aa).

A chloroplast-targeting transit peptide spans 1 to 55; that stretch reads MASAAAGASICIKSASCSPLAPGRISSLRSVSLPVSRKSFPSLRSSKGSFARVSC. Residues 59 to 134 form the Carrier domain; sequence PETVAKVCRI…DAADLIEKLM (76 aa). At S94 the chain carries O-(pantetheine 4'-phosphoryl)serine.

Belongs to the acyl carrier protein (ACP) family. 4'-phosphopantetheine is transferred from CoA to a specific serine of apo-ACP by acpS. This modification is essential for activity because fatty acids are bound in thioester linkage to the sulfhydryl of the prosthetic group.

The protein localises to the plastid. It is found in the chloroplast. It participates in lipid metabolism; fatty acid biosynthesis. Its function is as follows. Carrier of the growing fatty acid chain in fatty acid biosynthesis. The sequence is that of Acyl carrier protein 4, chloroplastic (ACL1) from Cuphea lanceolata (Cigar flower).